The chain runs to 601 residues: ATP-dependent lipid A-core flippase (601 aa).

The ABC transmembrane type-1 domain maps to 28–328 (LLSVVGLIVY…LTRVNAEFQR (301 aa)). Transmembrane regions (helical) follow at residues 32–52 (VGLIVYGLVDAAFISFIGPFI), 81–101 (VLLMAPIVVILMFSLRGFANF), 160–180 (ALISIVRDSVTIIGMLGLMFY), 183–203 (WKLSLCILVIGPIMGVVITIV), 267–287 (AVSQPLIMVIGSFALAFVLYA), and 296–316 (DLTAGTFATILGAMMAMLQPI). One can recognise an ABC transporter domain in the interval 360–597 (LRFDNVSFSY…GGMYAKLYQM (238 aa)). Residue 394–401 (GRSGSGKS) coordinates ATP.

It belongs to the ABC transporter superfamily. Lipid exporter (TC 3.A.1.106) family. Homodimer.

The protein localises to the cell inner membrane. It catalyses the reaction ATP + H2O + lipid A-core oligosaccharideSide 1 = ADP + phosphate + lipid A-core oligosaccharideSide 2.. In terms of biological role, involved in lipopolysaccharide (LPS) biosynthesis. Translocates lipid A-core from the inner to the outer leaflet of the inner membrane. Transmembrane domains (TMD) form a pore in the inner membrane and the ATP-binding domain (NBD) is responsible for energy generation. The polypeptide is ATP-dependent lipid A-core flippase (Shewanella oneidensis (strain ATCC 700550 / JCM 31522 / CIP 106686 / LMG 19005 / NCIMB 14063 / MR-1)).